Reading from the N-terminus, the 245-residue chain is Thiopurine S-methyltransferase (245 aa).

Residue 29–40 (WQEKWVNHKTGF) coordinates S-adenosyl-L-methionine. Phenylalanine 40 serves as a coordination point for substrate. An N6-acetyllysine modification is found at lysine 58. S-adenosyl-L-methionine-binding residues include leucine 69, glutamate 90, and arginine 152.

The protein belongs to the class I-like SAM-binding methyltransferase superfamily. TPMT family. As to quaternary structure, monomer.

Its subcellular location is the cytoplasm. It catalyses the reaction S-adenosyl-L-methionine + a thiopurine = S-adenosyl-L-homocysteine + a thiopurine S-methylether.. The protein is Thiopurine S-methyltransferase (TPMT) of Bos taurus (Bovine).